The chain runs to 253 residues: uncharacterized protein (253 aa).

The signal sequence occupies residues 1–19 (MRYLKKVTIYISLLILVSG). A lipid anchor (N-palmitoyl cysteine) is attached at Cys20. A lipid anchor (S-diacylglycerol cysteine) is attached at Cys20.

It belongs to the staphylococcal tandem lipoprotein family.

The protein resides in the cell membrane. This is an uncharacterized protein from Staphylococcus epidermidis (strain ATCC 35984 / DSM 28319 / BCRC 17069 / CCUG 31568 / BM 3577 / RP62A).